The chain runs to 371 residues: Dual-specificity RNA methyltransferase RlmN (371 aa).

The active-site Proton acceptor is the Glu-97. One can recognise a Radical SAM core domain in the interval 103–341 (DGDRATLCVS…VTVRTTRGDD (239 aa)). A disulfide bond links Cys-110 and Cys-346. [4Fe-4S] cluster contacts are provided by Cys-117, Cys-121, and Cys-124. Residues 171–172 (GE), Ser-203, 225–227 (SLH), and Asn-303 each bind S-adenosyl-L-methionine. Residue Cys-346 is the S-methylcysteine intermediate of the active site.

This sequence belongs to the radical SAM superfamily. RlmN family. [4Fe-4S] cluster serves as cofactor.

The protein resides in the cytoplasm. The enzyme catalyses adenosine(2503) in 23S rRNA + 2 reduced [2Fe-2S]-[ferredoxin] + 2 S-adenosyl-L-methionine = 2-methyladenosine(2503) in 23S rRNA + 5'-deoxyadenosine + L-methionine + 2 oxidized [2Fe-2S]-[ferredoxin] + S-adenosyl-L-homocysteine. It catalyses the reaction adenosine(37) in tRNA + 2 reduced [2Fe-2S]-[ferredoxin] + 2 S-adenosyl-L-methionine = 2-methyladenosine(37) in tRNA + 5'-deoxyadenosine + L-methionine + 2 oxidized [2Fe-2S]-[ferredoxin] + S-adenosyl-L-homocysteine. Its function is as follows. Specifically methylates position 2 of adenine 2503 in 23S rRNA and position 2 of adenine 37 in tRNAs. m2A2503 modification seems to play a crucial role in the proofreading step occurring at the peptidyl transferase center and thus would serve to optimize ribosomal fidelity. This Marinomonas sp. (strain MWYL1) protein is Dual-specificity RNA methyltransferase RlmN.